The sequence spans 186 residues: MKLIAGLGNPGKKYERTRHNVGFMVVDELSFRHQTPWKKSKFNGMTSEIIVGGEKMILVKPLTFMNASGECIRPLMDYYNIPIEDVVIVYDDLDLPVGKIRLRQKGSAGGHNGMKSIIQHVKTQEFNRIRVGVSRPLKGEVINYVLGDFPKAEQPDIIAAIQKSADAIEDFAQTPFIEVMNKYNQK.

Y14 serves as a coordination point for tRNA. The active-site Proton acceptor is the H19. TRNA-binding residues include F64, N66, and N112.

The protein belongs to the PTH family. In terms of assembly, monomer.

The protein resides in the cytoplasm. It carries out the reaction an N-acyl-L-alpha-aminoacyl-tRNA + H2O = an N-acyl-L-amino acid + a tRNA + H(+). In terms of biological role, hydrolyzes ribosome-free peptidyl-tRNAs (with 1 or more amino acids incorporated), which drop off the ribosome during protein synthesis, or as a result of ribosome stalling. Functionally, catalyzes the release of premature peptidyl moieties from peptidyl-tRNA molecules trapped in stalled 50S ribosomal subunits, and thus maintains levels of free tRNAs and 50S ribosomes. In Listeria monocytogenes serovar 1/2a (strain ATCC BAA-679 / EGD-e), this protein is Peptidyl-tRNA hydrolase.